The following is a 218-amino-acid chain: Methylthioribulose-1-phosphate dehydratase (218 aa).

2 residues coordinate Zn(2+): histidine 107 and histidine 109.

The protein belongs to the aldolase class II family. MtnB subfamily. The cofactor is Zn(2+).

It catalyses the reaction 5-(methylsulfanyl)-D-ribulose 1-phosphate = 5-methylsulfanyl-2,3-dioxopentyl phosphate + H2O. It participates in amino-acid biosynthesis; L-methionine biosynthesis via salvage pathway; L-methionine from S-methyl-5-thio-alpha-D-ribose 1-phosphate: step 2/6. Catalyzes the dehydration of methylthioribulose-1-phosphate (MTRu-1-P) into 2,3-diketo-5-methylthiopentyl-1-phosphate (DK-MTP-1-P). The sequence is that of Methylthioribulose-1-phosphate dehydratase from Xylella fastidiosa (strain Temecula1 / ATCC 700964).